A 382-amino-acid chain; its full sequence is ATP phosphoribosyltransferase regulatory subunit (382 aa).

Belongs to the class-II aminoacyl-tRNA synthetase family. HisZ subfamily. Heteromultimer composed of HisG and HisZ subunits.

The protein resides in the cytoplasm. It functions in the pathway amino-acid biosynthesis; L-histidine biosynthesis; L-histidine from 5-phospho-alpha-D-ribose 1-diphosphate: step 1/9. In terms of biological role, required for the first step of histidine biosynthesis. May allow the feedback regulation of ATP phosphoribosyltransferase activity by histidine. This is ATP phosphoribosyltransferase regulatory subunit from Burkholderia pseudomallei (strain K96243).